The chain runs to 229 residues: Sperm-associated microtubule inner protein 5 (229 aa).

The interval 181-201 (PEFSGPGQTPPSEDPQAPRPC) is disordered.

In terms of assembly, microtubule inner protein component of sperm flagellar doublet microtubules. In terms of tissue distribution, expressed in testis (at protein level).

It is found in the cytoplasm. The protein localises to the cytoskeleton. Its subcellular location is the flagellum axoneme. The protein resides in the nucleus. In terms of biological role, microtubule inner protein (MIP) part of the dynein-decorated doublet microtubules (DMTs) in flagellum axoneme. May serve to reinforce and thus stabilize the microtubule structure in the sperm flagella. This is Sperm-associated microtubule inner protein 5 (Spmip5) from Mus musculus (Mouse).